Here is a 165-residue protein sequence, read N- to C-terminus: MTVAVYPGTFDPFTRGHEDLVRRASSIFKELIVGVADSRSKHPFFTLEERIDIAKEVLGYYPNVKVVGFSGLLKDFAREHNARVIVRGLRAVSDFEYEFQMAGMNRYLLPDVETLFLTPSDQYQFISGTFVREIASMGGDVSKFVFPSVEKWLVKKIASDSQNKE.

T9 is a binding site for substrate. ATP is bound by residues 9-10 (TF) and H17. 3 residues coordinate substrate: K41, L73, and R87. Residues 88–90 (GLR), E98, and 123–129 (YQFISGT) each bind ATP.

The protein belongs to the bacterial CoaD family. In terms of assembly, homohexamer. It depends on Mg(2+) as a cofactor.

Its subcellular location is the cytoplasm. It catalyses the reaction (R)-4'-phosphopantetheine + ATP + H(+) = 3'-dephospho-CoA + diphosphate. It participates in cofactor biosynthesis; coenzyme A biosynthesis; CoA from (R)-pantothenate: step 4/5. Functionally, reversibly transfers an adenylyl group from ATP to 4'-phosphopantetheine, yielding dephospho-CoA (dPCoA) and pyrophosphate. The chain is Phosphopantetheine adenylyltransferase from Polynucleobacter necessarius subsp. necessarius (strain STIR1).